A 164-amino-acid polypeptide reads, in one-letter code: Nucleotide-binding protein Mfla_1706 (164 aa).

The protein belongs to the YajQ family.

Nucleotide-binding protein. This chain is Nucleotide-binding protein Mfla_1706, found in Methylobacillus flagellatus (strain ATCC 51484 / DSM 6875 / VKM B-1610 / KT).